A 153-amino-acid chain; its full sequence is Calmodulin-like protein 4 (153 aa).

4 consecutive EF-hand domains span residues 8–43 (DQIN…LGAS), 44–79 (PTPG…QIKQ), 81–116 (DPKK…LGEK), and 117–152 (LTHK…PVRD).

Belongs to the calmodulin family. In terms of assembly, interacts with MYO7B; the interaction mediates the association of CALML4 with the IMAC/intermicrovillar adhesion complex. Interacts with MYO7A. As to expression, expressed in the small intestine, in both mature enterocytes on the villus surface and immature cells that reside in the crypt stem-cell niche.

It is found in the cell projection. The protein resides in the microvillus. As part of the intermicrovillar adhesion complex/IMAC plays a role in epithelial brush border differentiation, controlling microvilli organization and length. Acts as a light chain for MYO7B and is required for efficient targeting of the IMAC to the tips of border brush microvilli. In Mus musculus (Mouse), this protein is Calmodulin-like protein 4 (Calml4).